A 345-amino-acid polypeptide reads, in one-letter code: uncharacterized protein (345 aa).

The 198-residue stretch at 1–198 folds into the CNNM transmembrane domain; that stretch reads MDVLSAVLLA…LSEGLLDHEE (198 aa). The next 2 helical transmembrane spans lie at 3-23 and 95-115; these read VLSA…FVGA and VPPA…HVLL. CBS domains follow at residues 217-280 and 285-342; these read AVPL…PQTV and VVRP…MRDG. A helical membrane pass occupies residues 312 to 332; the sequence is LALVTADNGSVVGMVALEDVV.

It belongs to the TerC family.

The protein resides in the cell membrane. This is an uncharacterized protein from Mycobacterium tuberculosis (strain ATCC 25618 / H37Rv).